Consider the following 544-residue polypeptide: Chaperonin GroEL (544 aa).

Residues threonine 29–proline 32, lysine 50, aspartate 86–threonine 90, glycine 414, asparagine 477–valine 479, and aspartate 493 contribute to the ATP site.

This sequence belongs to the chaperonin (HSP60) family. As to quaternary structure, forms a cylinder of 14 subunits composed of two heptameric rings stacked back-to-back. Interacts with the co-chaperonin GroES.

Its subcellular location is the cytoplasm. It carries out the reaction ATP + H2O + a folded polypeptide = ADP + phosphate + an unfolded polypeptide.. In terms of biological role, together with its co-chaperonin GroES, plays an essential role in assisting protein folding. The GroEL-GroES system forms a nano-cage that allows encapsulation of the non-native substrate proteins and provides a physical environment optimized to promote and accelerate protein folding. The polypeptide is Chaperonin GroEL (Campylobacter curvus (strain 525.92)).